We begin with the raw amino-acid sequence, 389 residues long: Lipid-A-disaccharide synthase (389 aa).

This sequence belongs to the LpxB family.

It catalyses the reaction a lipid X + a UDP-2-N,3-O-bis[(3R)-3-hydroxyacyl]-alpha-D-glucosamine = a lipid A disaccharide + UDP + H(+). The protein operates within bacterial outer membrane biogenesis; LPS lipid A biosynthesis. In terms of biological role, condensation of UDP-2,3-diacylglucosamine and 2,3-diacylglucosamine-1-phosphate to form lipid A disaccharide, a precursor of lipid A, a phosphorylated glycolipid that anchors the lipopolysaccharide to the outer membrane of the cell. This is Lipid-A-disaccharide synthase from Burkholderia cenocepacia (strain HI2424).